A 132-amino-acid polypeptide reads, in one-letter code: MSLSDPIADFLTRLRNGQAGMNKVVFVPHSKVVRSILDILLAEGYIEGFTEESKSSGIKYLKVCLKYYNCAPVIKKIVRVSRPGKRVYSSADRLPKFYNGLGVYIVSTSQGVMLDYRARKLGIGGEILCGVF.

It belongs to the universal ribosomal protein uS8 family. In terms of assembly, part of the 30S ribosomal subunit. Contacts proteins S5 and S12.

In terms of biological role, one of the primary rRNA binding proteins, it binds directly to 16S rRNA central domain where it helps coordinate assembly of the platform of the 30S subunit. The polypeptide is Small ribosomal subunit protein uS8 (Anaplasma marginale (strain Florida)).